A 230-amino-acid chain; its full sequence is Ureidoacrylate amidohydrolase RutB (230 aa).

The Proton acceptor role is filled by aspartate 24. Lysine 133 is an active-site residue. Residue cysteine 166 is the Nucleophile of the active site.

It belongs to the isochorismatase family. RutB subfamily.

The catalysed reaction is (Z)-3-ureidoacrylate + H2O + H(+) = (Z)-3-aminoacrylate + NH4(+) + CO2. It catalyses the reaction (Z)-3-ureidoacrylate + H2O = (Z)-3-aminoacrylate + carbamate + H(+). The enzyme catalyses (Z)-2-methylureidoacrylate + H2O + H(+) = (Z)-2-methylaminoacrylate + NH4(+) + CO2. Functionally, hydrolyzes ureidoacrylate to form aminoacrylate and carbamate. The carbamate hydrolyzes spontaneously, thereby releasing one of the nitrogen atoms of the pyrimidine ring as ammonia and one of its carbon atoms as CO2. The polypeptide is Ureidoacrylate amidohydrolase RutB (Escherichia coli O157:H7).